Here is a 505-residue protein sequence, read N- to C-terminus: Deoxyguanosinetriphosphate triphosphohydrolase (505 aa).

Residues 66-273 enclose the HD domain; it reads RLTHSMEVQQ…MEAADDISYC (208 aa).

Belongs to the dGTPase family. Type 1 subfamily. In terms of assembly, homotetramer. The cofactor is Mg(2+).

It catalyses the reaction dGTP + H2O = 2'-deoxyguanosine + triphosphate + H(+). DGTPase preferentially hydrolyzes dGTP over the other canonical NTPs. The sequence is that of Deoxyguanosinetriphosphate triphosphohydrolase from Escherichia coli (strain K12 / MC4100 / BW2952).